The primary structure comprises 337 residues: Probable cytosolic iron-sulfur protein assembly protein Ciao1 (337 aa).

7 WD repeats span residues 12-51 (GHRG…RWVA), 58-97 (GHSR…FECN), 102-141 (GHEN…EYEC), 147-186 (THTQ…SDWS), 193-232 (SHES…NEFG), 251-290 (YHSR…SPHE), and 301-337 (AHSQ…EPEE).

The protein belongs to the WD repeat CIA1 family.

In terms of biological role, essential component of the cytosolic iron-sulfur (Fe/S) protein assembly machinery. Required for the maturation of extramitochondrial Fe/S proteins. This chain is Probable cytosolic iron-sulfur protein assembly protein Ciao1, found in Aedes aegypti (Yellowfever mosquito).